A 329-amino-acid chain; its full sequence is Glyceraldehyde-3-phosphate dehydrogenase 1 (329 aa).

NAD(+)-binding positions include 11 to 12, Asp-33, and Glu-77; that span reads RI. Ser-148 carries the phosphoserine modification. 148-150 contributes to the D-glyceraldehyde 3-phosphate binding site; it reads SCT. Catalysis depends on Cys-149, which acts as the Nucleophile. Residue Ser-177 is modified to Phosphoserine. Residue Thr-179 participates in D-glyceraldehyde 3-phosphate binding. Position 200 is a phosphoserine (Ser-200). Residues 208–209 and Arg-231 each bind D-glyceraldehyde 3-phosphate; that span reads TG. Asn-313 is a binding site for NAD(+).

It belongs to the glyceraldehyde-3-phosphate dehydrogenase family. In terms of assembly, homotetramer.

The protein resides in the cytoplasm. It carries out the reaction D-glyceraldehyde 3-phosphate + phosphate + NAD(+) = (2R)-3-phospho-glyceroyl phosphate + NADH + H(+). It functions in the pathway carbohydrate degradation; glycolysis; pyruvate from D-glyceraldehyde 3-phosphate: step 1/5. This Kluyveromyces marxianus (Yeast) protein is Glyceraldehyde-3-phosphate dehydrogenase 1.